The primary structure comprises 96 residues: Aspartyl/glutamyl-tRNA(Asn/Gln) amidotransferase subunit C (96 aa).

The protein belongs to the GatC family. As to quaternary structure, heterotrimer of A, B and C subunits.

The enzyme catalyses L-glutamyl-tRNA(Gln) + L-glutamine + ATP + H2O = L-glutaminyl-tRNA(Gln) + L-glutamate + ADP + phosphate + H(+). It catalyses the reaction L-aspartyl-tRNA(Asn) + L-glutamine + ATP + H2O = L-asparaginyl-tRNA(Asn) + L-glutamate + ADP + phosphate + 2 H(+). Its function is as follows. Allows the formation of correctly charged Asn-tRNA(Asn) or Gln-tRNA(Gln) through the transamidation of misacylated Asp-tRNA(Asn) or Glu-tRNA(Gln) in organisms which lack either or both of asparaginyl-tRNA or glutaminyl-tRNA synthetases. The reaction takes place in the presence of glutamine and ATP through an activated phospho-Asp-tRNA(Asn) or phospho-Glu-tRNA(Gln). The chain is Aspartyl/glutamyl-tRNA(Asn/Gln) amidotransferase subunit C from Herpetosiphon aurantiacus (strain ATCC 23779 / DSM 785 / 114-95).